We begin with the raw amino-acid sequence, 192 residues long: Phosphoheptose isomerase (192 aa).

In terms of domain architecture, SIS spans L35–N192. N50–G52 contributes to the substrate binding site. H59 and E63 together coordinate Zn(2+). Residues E63, N92–D93, S118–S120, S123, and Q170 contribute to the substrate site. Zn(2+) contacts are provided by Q170 and H178.

The protein belongs to the SIS family. GmhA subfamily. Homotetramer. Requires Zn(2+) as cofactor.

It is found in the cytoplasm. The enzyme catalyses 2 D-sedoheptulose 7-phosphate = D-glycero-alpha-D-manno-heptose 7-phosphate + D-glycero-beta-D-manno-heptose 7-phosphate. Its pathway is carbohydrate biosynthesis; D-glycero-D-manno-heptose 7-phosphate biosynthesis; D-glycero-alpha-D-manno-heptose 7-phosphate and D-glycero-beta-D-manno-heptose 7-phosphate from sedoheptulose 7-phosphate: step 1/1. Functionally, catalyzes the isomerization of sedoheptulose 7-phosphate in D-glycero-D-manno-heptose 7-phosphate. The chain is Phosphoheptose isomerase from Helicobacter pylori (strain P12).